Reading from the N-terminus, the 412-residue chain is Lysosomal phospholipase A and acyltransferase (412 aa).

Residues 1 to 33 (MDRHLCTCRETQLRSGLLLPLFLLMMLADLTLP) form the signal peptide. Position 46 (D46) interacts with substrate. A disulfide bond links C65 and C89. N99 carries an N-linked (GlcNAc...) asparagine glycan. Catalysis depends on S198, which acts as the Acyl-ester intermediate. S198 contributes to the Zn(2+) binding site. M199 is a binding site for substrate. N-linked (GlcNAc...) asparagine glycosylation is found at N273 and N289. Position 355 (C355) interacts with Zn(2+). Residues D360 and H392 each act as charge relay system in the active site. H392 is a Zn(2+) binding site. A glycan (N-linked (GlcNAc...) asparagine) is linked at N398.

This sequence belongs to the AB hydrolase superfamily. Lipase family. N-glycosylated. N-glycosylation is important for maturation of the enzyme and normal subcellular location. Detected in blood plasma. Detected in alveolar macrophages (at protein level). Detected in heart, liver, spleen, kidney, thymus, brain and lung.

Its subcellular location is the secreted. The protein resides in the lysosome. It localises to the membrane. The catalysed reaction is a 1,2-diacyl-sn-glycero-3-phosphocholine + H2O = a 2-acyl-sn-glycero-3-phosphocholine + a fatty acid + H(+). It carries out the reaction 1-hexadecanoyl-2-(9Z-octadecenoyl)-sn-glycero-3-phosphocholine + H2O = 2-(9Z-octadecenoyl)-sn-glycero-3-phosphocholine + hexadecanoate + H(+). The enzyme catalyses 1,2-di-(9Z-octadecenoyl)-sn-glycero-3-phosphocholine + H2O = 2-(9Z-octadecenoyl)-sn-glycero-3-phosphocholine + (9Z)-octadecenoate + H(+). It catalyses the reaction 1-hexadecanoyl-2-glutaroyl-sn-glycero-3-phosphocholine + H2O = 2-glutaroyl-sn-glycero-3-phosphocholine + hexadecanoate + H(+). The catalysed reaction is 1-hexadecanoyl-2-nonadioyl-sn-glycero-3-phosphocholine + H2O = 2-nonadioyl-sn-glycero-3-phosphocholine + hexadecanoate + H(+). It carries out the reaction 1-hexadecanoyl-2-(5-oxopentanoyl)-sn-glycero-3-phosphocholine + H2O = 2-(5-oxopentanoyl)-sn-glycero-3-phosphocholine + hexadecanoate + H(+). The enzyme catalyses 1-hexadecanoyl-2-(9-oxononanoyl)-sn-glycero-3-phosphocholine + H2O = 2-(9-oxononanoyl)-sn-glycero-3-phosphocholine + hexadecanoate + H(+). It catalyses the reaction 1,2-dihexadecanoyl-sn-glycero-3-phosphocholine + H2O = 2-hexadecanoyl-sn-glycero-3-phosphocholine + hexadecanoate + H(+). The catalysed reaction is a 1,2-diacyl-sn-glycero-3-phosphocholine + H2O = a 1-acyl-sn-glycero-3-phosphocholine + a fatty acid + H(+). It carries out the reaction 1-hexadecanoyl-2-(9Z-octadecenoyl)-sn-glycero-3-phosphocholine + H2O = 1-hexadecanoyl-sn-glycero-3-phosphocholine + (9Z)-octadecenoate + H(+). The enzyme catalyses 1,2-di-(9Z-octadecenoyl)-sn-glycero-3-phosphocholine + H2O = 1-(9Z-octadecenoyl)-sn-glycero-3-phosphocholine + (9Z)-octadecenoate + H(+). It catalyses the reaction 1,2-dihexadecanoyl-sn-glycero-3-phosphocholine + H2O = 1-hexadecanoyl-sn-glycero-3-phosphocholine + hexadecanoate + H(+). The catalysed reaction is a 1-acyl-sn-glycero-3-phosphocholine + H2O = sn-glycerol 3-phosphocholine + a fatty acid + H(+). It carries out the reaction 1-hexadecanoyl-sn-glycero-3-phosphocholine + H2O = sn-glycerol 3-phosphocholine + hexadecanoate + H(+). The enzyme catalyses N-(acetyl)-sphing-4-enine + a 1,2-diacyl-sn-glycero-3-phosphoethanolamine = 1-O-acyl-N-(acetyl)-sphing-4-enine + a 2-acyl-sn-glycero-3-phosphoethanolamine. It catalyses the reaction 1-hexadecanoyl-2-(9Z-octadecenoyl)-sn-glycero-3-phosphoethanolamine + N-(acetyl)-sphing-4-enine = 2-(9Z-octadecenoyl)-sn-glycero-3-phosphoethanolamine + 1-hexadecanoyl-N-(acetyl)-sphing-4-enine. The catalysed reaction is 1-hexadecanoyl-2-(9Z,12Z-octadecadienoyl)-sn-glycero-3-phosphoethanolamine + N-(acetyl)-sphing-4-enine = 2-(9Z,12Z)-octadecadienoyl-sn-glycero-3-phosphoethanolamine + 1-hexadecanoyl-N-(acetyl)-sphing-4-enine. It carries out the reaction 1-hexadecanoyl-2-(5Z,8Z,11Z,14Z-eicosatetraenoyl)-sn-glycero-3-phosphoethanolamine + N-(acetyl)-sphing-4-enine = 2-(5Z,8Z,11Z,14Z)-eicosatetraenoyl-sn-glycero-3-phosphoethanolamine + 1-hexadecanoyl-N-(acetyl)-sphing-4-enine. The enzyme catalyses N-(acetyl)-sphing-4-enine + a 1,2-diacyl-sn-glycero-3-phosphoethanolamine = 1-O-acyl-N-(acetyl)-sphing-4-enine + a 1-acyl-sn-glycero-3-phosphoethanolamine. It catalyses the reaction 1-hexadecanoyl-2-(9Z-octadecenoyl)-sn-glycero-3-phosphoethanolamine + N-(acetyl)-sphing-4-enine = 1-(9Z-octadecenoyl)-N-(acetyl)-sphing-4-enine + 1-hexadecanoyl-sn-glycero-3-phosphoethanolamine. The catalysed reaction is 1-hexadecanoyl-2-(9Z,12Z-octadecadienoyl)-sn-glycero-3-phosphoethanolamine + N-(acetyl)-sphing-4-enine = 1-(9Z,12Z-octadecadienoyl)-N-acetylsphing-4-enine + 1-hexadecanoyl-sn-glycero-3-phosphoethanolamine. It carries out the reaction 1-hexadecanoyl-2-(5Z,8Z,11Z,14Z-eicosatetraenoyl)-sn-glycero-3-phosphoethanolamine + N-(acetyl)-sphing-4-enine = 1-(5Z,8Z,11Z,14Z)-eicosatetraenoyl-N-(acetyl)-sphing-4-enine + 1-hexadecanoyl-sn-glycero-3-phosphoethanolamine. The enzyme catalyses N-(acetyl)-sphing-4-enine + a 1,2-diacyl-sn-glycero-3-phosphocholine = 1-O-acyl-N-(acetyl)-sphing-4-enine + a 2-acyl-sn-glycero-3-phosphocholine. It catalyses the reaction 1-hexadecanoyl-2-(9Z-octadecenoyl)-sn-glycero-3-phosphocholine + N-(acetyl)-sphing-4-enine = 1-hexadecanoyl-N-(acetyl)-sphing-4-enine + 2-(9Z-octadecenoyl)-sn-glycero-3-phosphocholine. The catalysed reaction is 1-hexadecanoyl-2-(9Z,12Z-octadecadienoyl)-sn-glycero-3-phosphocholine + N-(acetyl)-sphing-4-enine = 2-(9Z,12Z-octadecadienoyl)-sn-glycero-3-phosphocholine + 1-hexadecanoyl-N-(acetyl)-sphing-4-enine. It carries out the reaction 1-hexadecanoyl-2-(5Z,8Z,11Z,14Z-eicosatetraenoyl)-sn-glycero-3-phosphocholine + N-(acetyl)-sphing-4-enine = 1-hexadecanoyl-N-(acetyl)-sphing-4-enine + 2-(5Z,8Z,11Z,14Z)-eicosatetraenoyl-sn-glycero-3-phosphocholine. The enzyme catalyses 1-hexadecanoyl-2-(4Z,7Z,10Z,13Z,16Z,19Z-docosahexaenoyl)-sn-glycero-3-phosphocholine + N-(acetyl)-sphing-4-enine = 2-(4Z,7Z,10Z,13Z,16Z,19Z-docosahexaenoyl)-sn-glycero-3-phosphocholine + 1-hexadecanoyl-N-(acetyl)-sphing-4-enine. It catalyses the reaction 1-hexadecanoyl-2-nonadioyl-sn-glycero-3-phosphocholine + N-(acetyl)-sphing-4-enine = 2-nonadioyl-sn-glycero-3-phosphocholine + 1-hexadecanoyl-N-(acetyl)-sphing-4-enine. The catalysed reaction is 1-octadecanoyl-2-(9Z-octadecenoyl)-sn-glycero-3-phosphocholine + N-(acetyl)-sphing-4-enine = 1-octadecanoyl-N-(acetyl)-sphing-4-enine + 2-(9Z-octadecenoyl)-sn-glycero-3-phosphocholine. It carries out the reaction 1-(9Z)-octadecenoyl-2-octadecanoyl-sn-glycero-3-phosphocholine + N-(acetyl)-sphing-4-enine = 2-octadecanoyl-sn-glycero-3-phosphocholine + 1-(9Z-octadecenoyl)-N-(acetyl)-sphing-4-enine. The enzyme catalyses 1-octadecanoyl-2-(5Z,8Z,11Z,14Z-eicosatetraenoyl)-sn-glycero-3-phosphocholine + N-(acetyl)-sphing-4-enine = 1-octadecanoyl-N-(acetyl)-sphing-4-enine + 2-(5Z,8Z,11Z,14Z)-eicosatetraenoyl-sn-glycero-3-phosphocholine. It catalyses the reaction 1-(9Z-octadecenoyl)-2-hexadecanoyl-sn-glycero-3-phosphocholine + N-(acetyl)-sphing-4-enine = 1-(9Z-octadecenoyl)-N-(acetyl)-sphing-4-enine + 2-hexadecanoyl-sn-glycero-3-phosphocholine. The catalysed reaction is N-(acetyl)-sphing-4-enine + a 1,2-diacyl-sn-glycero-3-phosphocholine = 1-O-acyl-N-(acetyl)-sphing-4-enine + a 1-acyl-sn-glycero-3-phosphocholine. It carries out the reaction 1-hexadecanoyl-2-(9Z-octadecenoyl)-sn-glycero-3-phosphocholine + N-(acetyl)-sphing-4-enine = 1-(9Z-octadecenoyl)-N-(acetyl)-sphing-4-enine + 1-hexadecanoyl-sn-glycero-3-phosphocholine. The enzyme catalyses 1-hexadecanoyl-2-(9Z,12Z-octadecadienoyl)-sn-glycero-3-phosphocholine + N-(acetyl)-sphing-4-enine = 1-(9Z,12Z-octadecadienoyl)-N-acetylsphing-4-enine + 1-hexadecanoyl-sn-glycero-3-phosphocholine. It catalyses the reaction 1-hexadecanoyl-2-(5Z,8Z,11Z,14Z-eicosatetraenoyl)-sn-glycero-3-phosphocholine + N-(acetyl)-sphing-4-enine = 1-(5Z,8Z,11Z,14Z)-eicosatetraenoyl-N-(acetyl)-sphing-4-enine + 1-hexadecanoyl-sn-glycero-3-phosphocholine. The catalysed reaction is 1-hexadecanoyl-2-(4Z,7Z,10Z,13Z,16Z,19Z-docosahexaenoyl)-sn-glycero-3-phosphocholine + N-(acetyl)-sphing-4-enine = 1-(4Z,7Z,10Z,13Z,16Z,19Z-docosahexaenoyl)-N-(acetyl)-sphing-4-enine + 1-hexadecanoyl-sn-glycero-3-phosphocholine. It carries out the reaction 1-octadecanoyl-2-(9Z-octadecenoyl)-sn-glycero-3-phosphocholine + N-(acetyl)-sphing-4-enine = 1-(9Z-octadecenoyl)-N-(acetyl)-sphing-4-enine + 1-octadecanoyl-sn-glycero-3-phosphocholine. The enzyme catalyses 1-octadecanoyl-2-(9Z,12Z)-octadecadienoyl-sn-glycero-3-phosphocholine + N-(acetyl)-sphing-4-enine = 1-(9Z,12Z-octadecadienoyl)-N-acetylsphing-4-enine + 1-octadecanoyl-sn-glycero-3-phosphocholine. It catalyses the reaction 1-(9Z-octadecenoyl)-2-hexadecanoyl-sn-glycero-3-phosphocholine + N-(acetyl)-sphing-4-enine = 1-hexadecanoyl-N-(acetyl)-sphing-4-enine + 1-(9Z-octadecenoyl)-sn-glycero-3-phosphocholine. The catalysed reaction is 1-(9Z)-octadecenoyl-2-octadecanoyl-sn-glycero-3-phosphocholine + N-(acetyl)-sphing-4-enine = 1-octadecanoyl-N-(acetyl)-sphing-4-enine + 1-(9Z-octadecenoyl)-sn-glycero-3-phosphocholine. It carries out the reaction 1,2-di-(9Z-octadecenoyl)-sn-glycero-3-phosphocholine + N-(acetyl)-sphing-4-enine = 1-(9Z-octadecenoyl)-N-(acetyl)-sphing-4-enine + 1-(9Z-octadecenoyl)-sn-glycero-3-phosphocholine. The enzyme catalyses 1-octadecanoyl-2-(5Z,8Z,11Z,14Z-eicosatetraenoyl)-sn-glycero-3-phosphocholine + N-(acetyl)-sphing-4-enine = 1-(5Z,8Z,11Z,14Z)-eicosatetraenoyl-N-(acetyl)-sphing-4-enine + 1-octadecanoyl-sn-glycero-3-phosphocholine. It catalyses the reaction a 1,2-diacyl-sn-glycero-3-phospho-L-serine + N-(acetyl)-sphing-4-enine = a 2-acyl-sn-glycero-3-phospho-L-serine + 1-O-acyl-N-(acetyl)-sphing-4-enine. The catalysed reaction is 1-octadecanoyl-2-(9Z-octadecenoyl)-sn-glycero-3-phospho-L-serine + N-(acetyl)-sphing-4-enine = 2-(9Z-octadecenoyl)-sn-glycero-3-phospho-L-serine + 1-octadecanoyl-N-(acetyl)-sphing-4-enine. It carries out the reaction a 1,2-diacyl-sn-glycero-3-phospho-L-serine + N-(acetyl)-sphing-4-enine = 1-O-acyl-N-(acetyl)-sphing-4-enine + a 1-acyl-sn-glycero-3-phospho-L-serine. The enzyme catalyses 1-octadecanoyl-2-(9Z-octadecenoyl)-sn-glycero-3-phospho-L-serine + N-(acetyl)-sphing-4-enine = 1-octadecanoyl-sn-glycero-3-phosphoserine + 1-(9Z-octadecenoyl)-N-(acetyl)-sphing-4-enine. It catalyses the reaction a 1,2-diacyl-sn-glycero-3-phospho-(1'-sn-glycerol) + N-(acetyl)-sphing-4-enine = 2-acyl-sn-glycero-3-phospho-(1'-sn-glycerol) + 1-O-acyl-N-(acetyl)-sphing-4-enine. The catalysed reaction is 1-octadecanoyl-2-(9Z-octadecenoyl)-sn-glycero-3-phospho-(1'-sn-glycerol) + N-(acetyl)-sphing-4-enine = 2-(9Z-octadecenoyl)-sn-glycero-3-phospho-(1'-sn-glycerol) + 1-octadecanoyl-N-(acetyl)-sphing-4-enine. It carries out the reaction a 1,2-diacyl-sn-glycero-3-phospho-(1'-sn-glycerol) + N-(acetyl)-sphing-4-enine = 1-O-acyl-N-(acetyl)-sphing-4-enine + 1-acyl-sn-glycero-3-phospho-(1'-sn-glycerol). The enzyme catalyses 1-octadecanoyl-2-(9Z-octadecenoyl)-sn-glycero-3-phospho-(1'-sn-glycerol) + N-(acetyl)-sphing-4-enine = 1-octadecanoyl-sn-glycero-3-phospho-(1'-sn-glycerol) + 1-(9Z-octadecenoyl)-N-(acetyl)-sphing-4-enine. It catalyses the reaction an N-acylethanolamine + a 1,2-diacyl-sn-glycero-3-phosphocholine = 2-(acylamino)ethyl fatty acid + a 2-acyl-sn-glycero-3-phosphocholine. The catalysed reaction is an N-acylethanolamine + a 1,2-diacyl-sn-glycero-3-phosphocholine = 2-(acylamino)ethyl fatty acid + a 1-acyl-sn-glycero-3-phosphocholine. It carries out the reaction N-(5Z,8Z,11Z,14Z-eicosatetraenoyl)-ethanolamine + 1,2-di-(9Z-octadecenoyl)-sn-glycero-3-phosphocholine = 2-[(5Z,8Z,11Z,14Z)-eicosatetraenoylamino]ethyl (9Z)-octadecenoate + (9Z-octadecenoyl)-sn-glycero-3-phosphocholine. The enzyme catalyses N-(9Z-octadecenoyl) ethanolamine + 1,2-di-(9Z-octadecenoyl)-sn-glycero-3-phosphocholine = 2-[(9Z)-octadecenoylamino]ethyl (9Z)-octadecenoate + (9Z-octadecenoyl)-sn-glycero-3-phosphocholine. It catalyses the reaction a 3-acyl-sn-glycerol + a 1,2-diacyl-sn-glycero-3-phosphocholine = a 1,3-diacylglycerol + a 1-acyl-sn-glycero-3-phosphocholine. The catalysed reaction is a 3-acyl-sn-glycerol + a 1,2-diacyl-sn-glycero-3-phosphocholine = a 1,3-diacylglycerol + a 2-acyl-sn-glycero-3-phosphocholine. It carries out the reaction 3-(9Z-octadecenoyl)-sn-glycerol + 1,2-di-(9Z-octadecenoyl)-sn-glycero-3-phosphocholine = 1,3-di-(9Z-octadecenoyl)-glycerol + (9Z-octadecenoyl)-sn-glycero-3-phosphocholine. The enzyme catalyses 3-hexadecanoyl-sn-glycerol + 1,2-di-(9Z-octadecenoyl)-sn-glycero-3-phosphocholine = 1-(9Z)-octadecenoyl-3-hexadecanoyl-sn-glycerol + (9Z-octadecenoyl)-sn-glycero-3-phosphocholine. It catalyses the reaction a 1-acyl-sn-glycerol + a 1,2-diacyl-sn-glycero-3-phosphocholine = a 1,3-diacylglycerol + a 2-acyl-sn-glycero-3-phosphocholine. The catalysed reaction is a 1-acyl-sn-glycerol + a 1,2-diacyl-sn-glycero-3-phosphocholine = a 1,3-diacylglycerol + a 1-acyl-sn-glycero-3-phosphocholine. It carries out the reaction 1-(9Z-octadecenoyl)-sn-glycerol + 1,2-di-(9Z-octadecenoyl)-sn-glycero-3-phosphocholine = 1,3-di-(9Z-octadecenoyl)-glycerol + (9Z-octadecenoyl)-sn-glycero-3-phosphocholine. The enzyme catalyses 1-hexadecanoyl-sn-glycerol + 1,2-di-(9Z-octadecenoyl)-sn-glycero-3-phosphocholine = 1-hexadecanoyl-3-(9Z)-octadecenoyl-sn-glycerol + (9Z-octadecenoyl)-sn-glycero-3-phosphocholine. It catalyses the reaction a 2-acylglycerol + a 1,2-diacyl-sn-glycero-3-phosphocholine = a 1,2-diacylglycerol + a 2-acyl-sn-glycero-3-phosphocholine. The catalysed reaction is a 2-acylglycerol + a 1,2-diacyl-sn-glycero-3-phosphocholine = a 1,2-diacylglycerol + a 1-acyl-sn-glycero-3-phosphocholine. It carries out the reaction 2-hexadecanoylglycerol + 1,2-di-(9Z-octadecenoyl)-sn-glycero-3-phosphocholine = 1-(9Z)-octadecenoyl-2-hexadecanoylglycerol + (9Z-octadecenoyl)-sn-glycero-3-phosphocholine. The enzyme catalyses 1-O-alkylglycerol + a 1,2-diacyl-sn-glycero-3-phosphocholine = 1-O-alkyl-3-acylglycerol + a 1-acyl-sn-glycero-3-phosphocholine. It catalyses the reaction 1-O-alkylglycerol + a 1,2-diacyl-sn-glycero-3-phosphocholine = 1-O-alkyl-3-acylglycerol + a 2-acyl-sn-glycero-3-phosphocholine. The catalysed reaction is 1-O-hexadecylglycerol + 1,2-di-(9Z-octadecenoyl)-sn-glycero-3-phosphocholine = 1-O-hexadecyl-3-(9Z)-octadecenoylglycerol + (9Z-octadecenoyl)-sn-glycero-3-phosphocholine. It carries out the reaction 1-O-alkyl-2-acyl-sn-glycerol + a 1,2-diacyl-sn-glycero-3-phosphocholine = 1-O-alkyl-2,3-diacyl-sn-glycerol + a 2-acyl-sn-glycero-3-phosphocholine. The enzyme catalyses 1-O-alkyl-2-acyl-sn-glycerol + a 1,2-diacyl-sn-glycero-3-phosphocholine = 1-O-alkyl-2,3-diacyl-sn-glycerol + a 1-acyl-sn-glycero-3-phosphocholine. It catalyses the reaction 1-O-hexadecyl-2-acetyl-sn-glycerol + 1,2-di-(9Z-octadecenoyl)-sn-glycero-3-phosphocholine = 1-O-hexadecyl-2-acetyl-3-(9Z)-octadecenoyl-sn-glycerol + (9Z-octadecenoyl)-sn-glycero-3-phosphocholine. The catalysed reaction is 1-O-hexadecyl-2-O-methyl-sn-glycerol + 1,2-di-(9Z-octadecenoyl)-sn-glycero-3-phosphocholine = 1-O-hexadecyl-2-O-methyl-3-(9Z)-octadecenoyl-sn-glycerol + (9Z-octadecenoyl)-sn-glycero-3-phosphocholine. It carries out the reaction a 1,2-diacyl-sn-glycero-3-phosphoethanolamine + H2O = a 1-acyl-sn-glycero-3-phosphoethanolamine + a fatty acid + H(+). The enzyme catalyses 1-acyl-2-(5Z,8Z,11Z,14Z)-eicosatetraenoyl-sn-glycero-3-phosphoethanolamine + H2O = a 1-acyl-sn-glycero-3-phosphoethanolamine + (5Z,8Z,11Z,14Z)-eicosatetraenoate + H(+). It catalyses the reaction a 1,2-diacyl-sn-glycero-3-phospho-(1'-sn-glycerol) + H2O = 1-acyl-sn-glycero-3-phospho-(1'-sn-glycerol) + a fatty acid + H(+). The catalysed reaction is 1-hexadecanoyl-2-(9Z-octadecenoyl)-sn-glycero-3-phospho-(1'-sn-glycerol) + H2O = 1-hexadecanoyl-sn-glycero-3-phospho-(1'-sn-glycerol) + (9Z)-octadecenoate + H(+). It carries out the reaction a 1,2-diacyl-sn-glycero-3-phospho-(1'-sn-glycerol) + H2O = 2-acyl-sn-glycero-3-phospho-(1'-sn-glycerol) + a fatty acid + H(+). The enzyme catalyses 1-hexadecanoyl-2-(9Z-octadecenoyl)-sn-glycero-3-phospho-(1'-sn-glycerol) + H2O = 2-(9Z-octadecenoyl)-sn-glycero-3-phospho-(1'-sn-glycerol) + hexadecanoate + H(+). Phospholipase sn-2 versus sn-1 positional specificity is affected by the phospholipid composition of membranes. Phospholipase A2 activity toward 1-hexadecanoyl-2-(5Z,8Z,11Z,14Z-eicosatetraenoyl)-sn-glycero-3-phosphocholine (PAPE) is enhanced in the presence of 1,2-dioleoyl-sn-glycero-3-phosphocholine (DOPC), which promotes lipid bilayer formation. O-acyltransferase activity is inhibited by antiarrhythmic drug amiodarone. In terms of biological role, has dual calcium-independent phospholipase and O-acyltransferase activities with a potential role in glycerophospholipid homeostasis and remodeling of acyl groups of lipophilic alcohols present in acidic cellular compartments. Catalyzes hydrolysis of the ester bond of the fatty acyl group attached at sn-1 or sn-2 position of phospholipids (phospholipase A1 or A2 activity) and transfer it to the hydroxyl group at the first carbon of lipophilic alcohols (O-acyltransferase activity). Among preferred fatty acyl donors are phosphatidylcholines, phosphatidylethanolamines, phosphatidylglycerols and phosphatidylserines. Favors sn-2 over sn-1 deacylation of unsaturated fatty acyl groups of phosphatidylcholines, phosphatidylethanolamines, and phosphatidylglycerols. Among preferred fatty acyl acceptors are natural lipophilic alcohols including short-chain ceramide N-acetyl-sphingosine (C2 ceramide), alkylacylglycerols, monoacylglycerols, and acylethanolamides such as anandamide and oleoylethanolamide. Selectively hydrolyzes the sn-1 fatty acyl group of truncated oxidized phospholipids and may play a role in detoxification of reactive oxidized phospholipids during oxidative stress. Required for normal phospholipid degradation in alveolar macrophages with potential implications in the clearance of pulmonary surfactant, which is mainly composed of dipalmitoylphosphatidylcholine (1,2-dihexadecanoyl-sn-glycero-3-phosphocholine). Involved in the first step of bis(monoacylglycero)phosphate (BMP) de novo synthesis from phosphatidylglycerol (1,2-diacyl-sn-glycero-3-phospho-(1'-sn-glycerol), PG). BMP is an important player in cargo sorting and degradation, regulation of cellular cholesterol levels and intercellular communication. At neutral pH, hydrolyzes the sn-1 fatty acyl group of the lysophosphatidylcholines. This Mus musculus (Mouse) protein is Lysosomal phospholipase A and acyltransferase.